We begin with the raw amino-acid sequence, 239 residues long: 2,3,4,5-tetrahydropyridine-2,6-dicarboxylate N-acetyltransferase (239 aa).

Belongs to the transferase hexapeptide repeat family. DapH subfamily.

The catalysed reaction is (S)-2,3,4,5-tetrahydrodipicolinate + acetyl-CoA + H2O = L-2-acetamido-6-oxoheptanedioate + CoA. Its pathway is amino-acid biosynthesis; L-lysine biosynthesis via DAP pathway; LL-2,6-diaminopimelate from (S)-tetrahydrodipicolinate (acetylase route): step 1/3. Catalyzes the transfer of an acetyl group from acetyl-CoA to tetrahydrodipicolinate. This is 2,3,4,5-tetrahydropyridine-2,6-dicarboxylate N-acetyltransferase from Staphylococcus haemolyticus (strain JCSC1435).